A 383-amino-acid chain; its full sequence is 8-amino-7-oxononanoate synthase (383 aa).

Substrate-binding residues include arginine 27 and arginine 34. Residue 114 to 115 (GY) participates in pyridoxal 5'-phosphate binding. Residue histidine 139 participates in substrate binding. Pyridoxal 5'-phosphate is bound by residues serine 187, 212 to 215 (DDAH), and 232 to 235 (TLSK). Residue lysine 235 is modified to N6-(pyridoxal phosphate)lysine. Residue threonine 344 coordinates substrate.

This sequence belongs to the class-II pyridoxal-phosphate-dependent aminotransferase family. BioF subfamily. As to quaternary structure, homodimer. The cofactor is pyridoxal 5'-phosphate.

It carries out the reaction 6-carboxyhexanoyl-[ACP] + L-alanine + H(+) = (8S)-8-amino-7-oxononanoate + holo-[ACP] + CO2. It functions in the pathway cofactor biosynthesis; biotin biosynthesis. Functionally, catalyzes the decarboxylative condensation of pimeloyl-[acyl-carrier protein] and L-alanine to produce 8-amino-7-oxononanoate (AON), [acyl-carrier protein], and carbon dioxide. This chain is 8-amino-7-oxononanoate synthase, found in Methylorubrum extorquens (strain PA1) (Methylobacterium extorquens).